The following is a 701-amino-acid chain: Probable cytosolic oligopeptidase A (701 aa).

At A2 the chain carries N-acetylalanine. Positions 148–194 (IALEDDKREEFNKIEQELEKLSHKFSENVLDATKKFEKLITDKKEIE) form a coiled coil. H483 contacts Zn(2+). E484 is an active-site residue. Residues H487 and E513 each coordinate Zn(2+). 615-621 (HIFAGGY) lines the substrate pocket.

Belongs to the peptidase M3 family. Zn(2+) is required as a cofactor.

It localises to the cytoplasm. Its subcellular location is the cytosol. The catalysed reaction is Hydrolysis of oligopeptides, with broad specificity. Gly or Ala commonly occur as P1 or P1' residues, but more distant residues are also important, as is shown by the fact that Z-Gly-Pro-Gly-|-Gly-Pro-Ala is cleaved, but not Z-(Gly)(5).. With respect to regulation, inhibited by salicylic acid. In terms of biological role, oligopeptidase that may be involved in the degradation of proteasome-generated peptides. Binds salicylic acid. The chain is Probable cytosolic oligopeptidase A from Arabidopsis thaliana (Mouse-ear cress).